Consider the following 1436-residue polypeptide: Non-structural polyprotein 1AB (1436 aa).

Positions 104 to 142 (KLIHKANALQERLRLSQEEKATLALDVQFLQHENVRLKE) form a coiled coil. 5 helical membrane passes run 156-176 (WIIM…YAHS), 239-259 (VFYY…LAIG), 286-306 (VLPT…TLMV), 313-333 (LLAI…LCFM), and 344-364 (GLIA…LTGT). Active-site charge relay system; for serine protease activity residues include histidine 461, aspartate 489, and serine 551. A coiled-coil region spans residues 587 to 620 (VKAPSQVELLKEEIERLKAQLNSATENATTVVTQ). Tyrosine 693 bears the O-(5'-phospho-RNA)-tyrosine mark. Disordered regions lie at residues 756–828 (AKPI…YSQT) and 913–934 (SKNK…EDQG). The RdRp catalytic domain occupies 1181-1307 (KHFIEFDWTR…TTPSVPDDYE (127 aa)).

It belongs to the astroviridae polyprotein 1AB family. As to quaternary structure, monomer. Cleaved by the viral and host proteases. The protease is probably autocatalytically cleaved.

The protein localises to the host membrane. The catalysed reaction is RNA(n) + a ribonucleoside 5'-triphosphate = RNA(n+1) + diphosphate. In terms of biological role, responsible for the cleavage of the polyprotein into functional products. Functionally, protein covalently attached to the 5' extremity of the genomic and subgenomic RNAs. It may serve as a primer for the replicase. This Homo sapiens (Human) protein is Non-structural polyprotein 1AB (ORF1).